The primary structure comprises 970 residues: MDIQLFSKTPSVTVFDNRGLSVRDIAYRRHPDTPKVTEECITYHQFDFRGFLAQSLDPRLNHKEVTNFSYLTDLNGNIIYTQSVDAGNTLVLNDTEGRSVIAMTNISRGENGKDDLSLAVTRTFQYENAPLPGRPLSVTEQVNGENARITEHFVYAGNTPQEKNLNLAGQCVSYYDAAGLIQTDSVSLTGKPLSVSRKLLKNLDDTNILADWQGNDTSAWNSLLATEIYTTVTRTDAAGAVLTTIDAVGNQQRVAFDIAGQLSASWLTLKGGQEQVIIKVLTYSAAGQKLREEGGNGVVTTYTYEAETQRLIGIKTERPNGHAAGAKVLQDLRYEYDPVGNVLSITNDAEETRFWRNQKVVPENAYRYDSLYQLVSASGREVAGAGQQGSDLPSPLVPLPSDSSVYTNYTRTYTYDSAGNLMRIRHSAPATNNNYTLNITVSERSNRGVMSSLTENPADVDALFTASGSQKCLQQGQSLIWTPRGELRTVLLVARGETADDSESYRYDGSSQRILKISSQQTNHSARVQRALYLPGLEWRTMTGGVAEAENLQVICIGEAGRAQVRVLHWESGKPDGIINDQIRWSYDNLTCSSGLEVDGDGLVISMEEYYPYGGTAVWAARSHIETAYKTVRYSGKERDATGLYYYGFRYYQPWAGRWLSADPAGTVDGLNLYRMVRNNPLRLTDPDGMAPLDWLDLDTTNASRDIVKAIYQLNQIDGPHRGVRDTYQRMTESTGMILQETLNNEAVLKGIKQKDKEKKSRGMKFTNSKLKTYAAHAGVLNTLQPDPVYKDGFLNLPGSLGNKNTFPGVELIEDKVKPSLSQYHPDKLGKSQRWKPESSLGYYRVADTEAFITGIRSQYKSSGTDLHAVVEGRIRDHLLANNNVLPKMAGIAGLHAEVQALNYIISNPDIEGGNAERLNGSYIFTQRLVGDVNQDFPACYNCSGIISGLENVMTGRVNNDVRLKRRKSF.

9 RHS repeats span residues 168–182, 297–311, 329–343, 361–375, 408–422, 500–514, 580–594, 606–620, and 640–654; these read AGQC…GLIQ, GVVT…TQRL, LQDL…GNVL, VPEN…YQLV, NYTR…GNLM, DDSE…SQRI, NDQI…TCSS, SMEE…AVWA, and DATG…YYQP. An RHS-repeat associated core domain region spans residues 610–690; sequence YYPYGGTAVW…PLRLTDPDGM (81 aa). Residues 849-950 form a deaminase domain region; the sequence is TEAFITGIRS…YNCSGIISGL (102 aa).

The protein belongs to the RHS family. In terms of assembly, semipurified toxin complex consists of at least YenA1-YenA2-YenB-YenC1-YenC2-Chi1-Chi2. YenB and the N-terminus of YenC2 form a large hollow shell of beta-strands. The shell is closed at both ends, within which the C-terminus of YenC2 is probably found. The C-terminal region dissociates from the YenB-YenC2 complex at pH 4.5 but not 7.5. The Yen-TC:K9 subcomplex is about 26 nm tall and 22 nm in diameter with 5-fold symmetry and 5 copies of YenA1, YenA2, Chi1 and Chi2; the chitinase subunits may be solvent accessible on the exterior the complex. The Yen-TC:K9 subcomplex has no insecticidal activity. The native complex with additional YenB, YenC1 and YenC2 subunits is 16 nm taller and is insecticidal; the toxicity-conferring subunits are present at about 1 copy each.

The protein resides in the secreted. Its activity is regulated as follows. Toxin complex is secreted when grown at 25 degrees Celsius or less; at higher temperatures the proteins are present intracellularly but not secreted. Part of an orally active toxin complex (TC) with strong insecticidal effects on larvae of the Coleoptera Costelytra zealandica, Acrossidius tasmania and Adoryphorus couloni and some Lepidoptera larvae. The TC has an endochitinase activity. In Yersinia entomophaga, this protein is Toxin subunit YenC2.